Here is a 147-residue protein sequence, read N- to C-terminus: MLGLPWKGGLSWALLLLLLGSQILLIYAWHFHEQRDCDEHNVMARYLPATVEFAVHTFNQQSKDYYAYRLGHILNSWKEQVESKTVFSMELLLGRTRCGKFEDDIDNCHFQESTELNNTFTCFFTISTRPWMTQFSLLNKTCLEGFH.

The signal sequence occupies residues 1–28 (MLGLPWKGGLSWALLLLLLGSQILLIYA). The cysteines at positions 98 and 108 are disulfide-linked. N-linked (GlcNAc...) asparagine glycosylation is found at asparagine 117 and asparagine 139. An intrachain disulfide couples cysteine 122 to cysteine 142.

This sequence belongs to the cystatin family. Specifically expressed in testis.

It is found in the secreted. The sequence is that of Cystatin-9-like (CST9L) from Homo sapiens (Human).